We begin with the raw amino-acid sequence, 278 residues long: Sulfur carrier protein FdhD (278 aa).

Cys-121 (cysteine persulfide intermediate) is an active-site residue. Residue 260-265 (FCKPGR) participates in Mo-bis(molybdopterin guanine dinucleotide) binding.

It belongs to the FdhD family.

It is found in the cytoplasm. Its function is as follows. Required for formate dehydrogenase (FDH) activity. Acts as a sulfur carrier protein that transfers sulfur from IscS to the molybdenum cofactor prior to its insertion into FDH. The polypeptide is Sulfur carrier protein FdhD (Salmonella schwarzengrund (strain CVM19633)).